A 452-amino-acid chain; its full sequence is 3-phosphoshikimate 1-carboxyvinyltransferase (452 aa).

3 residues coordinate 3-phosphoshikimate: lysine 24, serine 25, and arginine 29. Lysine 24 is a binding site for phosphoenolpyruvate. Phosphoenolpyruvate-binding residues include glycine 95 and arginine 123. Residues serine 167, glutamine 169, aspartate 319, and lysine 346 each contribute to the 3-phosphoshikimate site. Glutamine 169 is a phosphoenolpyruvate binding site. Aspartate 319 acts as the Proton acceptor in catalysis. Phosphoenolpyruvate contacts are provided by arginine 350 and arginine 394.

Belongs to the EPSP synthase family. In terms of assembly, monomer.

The protein localises to the cytoplasm. The enzyme catalyses 3-phosphoshikimate + phosphoenolpyruvate = 5-O-(1-carboxyvinyl)-3-phosphoshikimate + phosphate. It participates in metabolic intermediate biosynthesis; chorismate biosynthesis; chorismate from D-erythrose 4-phosphate and phosphoenolpyruvate: step 6/7. Catalyzes the transfer of the enolpyruvyl moiety of phosphoenolpyruvate (PEP) to the 5-hydroxyl of shikimate-3-phosphate (S3P) to produce enolpyruvyl shikimate-3-phosphate and inorganic phosphate. This chain is 3-phosphoshikimate 1-carboxyvinyltransferase, found in Phenylobacterium zucineum (strain HLK1).